We begin with the raw amino-acid sequence, 214 residues long: Ribosomal RNA small subunit methyltransferase G (214 aa).

Residues G77, L82, 128–129, and R143 each bind S-adenosyl-L-methionine; that span reads VE.

Belongs to the methyltransferase superfamily. RNA methyltransferase RsmG family.

It is found in the cytoplasm. It carries out the reaction guanosine(527) in 16S rRNA + S-adenosyl-L-methionine = N(7)-methylguanosine(527) in 16S rRNA + S-adenosyl-L-homocysteine. In terms of biological role, specifically methylates the N7 position of guanine in position 527 of 16S rRNA. The sequence is that of Ribosomal RNA small subunit methyltransferase G from Nitrosomonas eutropha (strain DSM 101675 / C91 / Nm57).